We begin with the raw amino-acid sequence, 475 residues long: Glucose-6-phosphate 1-dehydrogenase gcd1 (475 aa).

The NADP(+) site is built by Arg-42 and Lys-146. D-glucose 6-phosphate contacts are provided by Lys-146, Glu-214, and Asp-233. Catalysis depends on His-238, which acts as the Proton acceptor. Lys-332 contacts D-glucose 6-phosphate. Positions 342 and 365 each coordinate NADP(+).

It belongs to the glucose-6-phosphate dehydrogenase family.

It is found in the cytoplasm. It catalyses the reaction D-glucose 6-phosphate + NADP(+) = 6-phospho-D-glucono-1,5-lactone + NADPH + H(+). It participates in carbohydrate degradation; pentose phosphate pathway; D-ribulose 5-phosphate from D-glucose 6-phosphate (oxidative stage): step 1/3. Its function is as follows. Catalyzes the rate-limiting step of the oxidative pentose-phosphate pathway, which represents a route for the dissimilation of carbohydrates besides glycolysis. The main function of this enzyme is to provide reducing power (NADPH) and pentose phosphates for fatty acid and nucleic acid synthesis. The chain is Glucose-6-phosphate 1-dehydrogenase gcd1 from Schizosaccharomyces pombe (strain 972 / ATCC 24843) (Fission yeast).